Here is a 293-residue protein sequence, read N- to C-terminus: Diaminopimelate epimerase (293 aa).

Substrate contacts are provided by Asn-17, Gln-47, and Asn-67. Cys-76 acts as the Proton donor in catalysis. Residues 77 to 78 (GN), Asn-164, Asn-197, and 215 to 216 (ER) each bind substrate. The active-site Proton acceptor is Cys-224. 225-226 (GS) provides a ligand contact to substrate.

It belongs to the diaminopimelate epimerase family. As to quaternary structure, homodimer.

The protein localises to the cytoplasm. It carries out the reaction (2S,6S)-2,6-diaminopimelate = meso-2,6-diaminopimelate. Its pathway is amino-acid biosynthesis; L-lysine biosynthesis via DAP pathway; DL-2,6-diaminopimelate from LL-2,6-diaminopimelate: step 1/1. Functionally, catalyzes the stereoinversion of LL-2,6-diaminopimelate (L,L-DAP) to meso-diaminopimelate (meso-DAP), a precursor of L-lysine and an essential component of the bacterial peptidoglycan. This chain is Diaminopimelate epimerase, found in Rhodopseudomonas palustris (strain ATCC BAA-98 / CGA009).